A 160-amino-acid chain; its full sequence is Transcription antitermination protein NusB (160 aa).

The protein belongs to the NusB family.

In terms of biological role, involved in transcription antitermination. Required for transcription of ribosomal RNA (rRNA) genes. Binds specifically to the boxA antiterminator sequence of the ribosomal RNA (rrn) operons. The chain is Transcription antitermination protein NusB from Rhizobium etli (strain CIAT 652).